Reading from the N-terminus, the 358-residue chain is Biotin synthase (358 aa).

One can recognise a Radical SAM core domain in the interval 55–278 (NKVRIHILDN…VNPDSEIRIA (224 aa)). [4Fe-4S] cluster-binding residues include Cys-70, Cys-74, and Cys-77. Cys-114, Cys-146, Cys-206, and Arg-276 together coordinate [2Fe-2S] cluster.

This sequence belongs to the radical SAM superfamily. Biotin synthase family. Homodimer. [4Fe-4S] cluster serves as cofactor. The cofactor is [2Fe-2S] cluster.

It catalyses the reaction (4R,5S)-dethiobiotin + (sulfur carrier)-SH + 2 reduced [2Fe-2S]-[ferredoxin] + 2 S-adenosyl-L-methionine = (sulfur carrier)-H + biotin + 2 5'-deoxyadenosine + 2 L-methionine + 2 oxidized [2Fe-2S]-[ferredoxin]. It participates in cofactor biosynthesis; biotin biosynthesis; biotin from 7,8-diaminononanoate: step 2/2. Catalyzes the conversion of dethiobiotin (DTB) to biotin by the insertion of a sulfur atom into dethiobiotin via a radical-based mechanism. This Leptospira borgpetersenii serovar Hardjo-bovis (strain JB197) protein is Biotin synthase.